A 304-amino-acid chain; its full sequence is Protein phosphatase PTC7 homolog (304 aa).

Residues 1-68 (MFSVLSYGRL…GDDACFVARH (68 aa)) constitute a mitochondrion transit peptide. Positions 69 to 299 (RSADVLGVAD…DDITVLLSIV (231 aa)) constitute a PPM-type phosphatase domain. Aspartate 78, glycine 79, and aspartate 223 together coordinate Mn(2+).

This sequence belongs to the PP2C family. Interacts with FBXL4, BNIP3 and NIX; these interactions are important for ubiquitination and degradation of BNIP3 and NIX. Mg(2+) serves as cofactor. It depends on Mn(2+) as a cofactor. As to expression, expressed in keratinocytes (at protein level).

The protein resides in the mitochondrion matrix. It catalyses the reaction O-phospho-L-seryl-[protein] + H2O = L-seryl-[protein] + phosphate. The catalysed reaction is O-phospho-L-threonyl-[protein] + H2O = L-threonyl-[protein] + phosphate. With respect to regulation, inhibited by sodium orthovanadate. In terms of biological role, protein phosphatase that plays an essential role in mitochondrial metabolism and biogenesis. Positively regulates biosynthesis of the ubiquinone, coenzyme Q. Dephosphorylates the ubiquinone biosynthesis protein COQ7 which is likely to lead to its activation. Serves as a crucial sensor for mitophagy, though the underlying mechanism remains ambiguous. May dephosphorylate BNIP3 and NIX and thereby directly regulates mitophagy receptor function and stability. Alternatively, promotes SCF-FBXL4-dependent ubiquitination and degradation of BNIP3 and NIX independently of its catalytic activity to restrain mitophagy. In Homo sapiens (Human), this protein is Protein phosphatase PTC7 homolog (PPTC7).